The chain runs to 327 residues: 2-methoxy-6-polyprenyl-1,4-benzoquinol methylase, mitochondrial (327 aa).

The N-terminal 49 residues, 1-49 (MAAPRCCVLWRVCGRGWWRATGHCRLPGCHRSWPWATLGTRSLSQEKRA), are a transit peptide targeting the mitochondrion. S-adenosyl-L-methionine-binding positions include T117, D171, and 199–200 (DA).

It belongs to the class I-like SAM-binding methyltransferase superfamily. MenG/UbiE family. In terms of assembly, component of a multi-subunit COQ enzyme complex, composed of at least COQ3, COQ4, COQ5, COQ6, COQ7 and COQ9. Interacts with PYURF; the interaction is direct, stabilizes COQ5 protein and associates PYURF with COQ enzyme complex.

It is found in the mitochondrion inner membrane. It carries out the reaction 2-methoxy-6-(all-trans-decaprenyl)benzene-1,4-diol + S-adenosyl-L-methionine = 5-methoxy-2-methyl-3-(all-trans-decaprenyl)benzene-1,4-diol + S-adenosyl-L-homocysteine + H(+). It participates in cofactor biosynthesis; ubiquinone biosynthesis. Functionally, methyltransferase required for the conversion of 2-decaprenyl-6-methoxy-1,4-benzoquinol (DDMQH2) to 2-decaprenyl-3-methyl-6-methoxy-1,4-benzoquinol (DMQH2). In Mus musculus (Mouse), this protein is 2-methoxy-6-polyprenyl-1,4-benzoquinol methylase, mitochondrial.